The sequence spans 226 residues: Gap junction beta-2 protein (226 aa).

An intramembrane segment occupies 2–13 (DWGALQTILGGV). Residues 14–20 (NKYSTSI) lie on the Cytoplasmic side of the membrane. The helical transmembrane segment at 21–40 (GKIWLTVLFIFRIMILVVAA) threads the bilayer. Topologically, residues 41 to 73 (KEVWGDEQADFVCNTLQPGCKNVCYDHYFPISH) are extracellular. 3 residues coordinate Ca(2+): E42, G45, and E47. Intrachain disulfides connect C53-C180, C60-C174, and C64-C169. The chain crosses the membrane as a helical span at residues 74-94 (IRLWALQLIFVSTPALLVAMH). Over 95 to 135 (VAYRRHEKKRKFIKGEIKNEFKDIEEIKTQKVRIEGSLWWT) the chain is Cytoplasmic. The chain crosses the membrane as a helical span at residues 136-156 (YTSSIFFRVVFEAAFMYVFYV). The Extracellular segment spans residues 157 to 189 (MYDGFSMQRLVKCNAWPCPNTVDCFVSRPTEKT). The chain crosses the membrane as a helical span at residues 190–210 (VFTVFMIAVSGICILLNVTEL). Residues 211 to 226 (CYLLIRYCSGKSKKPV) are Cytoplasmic-facing.

The protein belongs to the connexin family. Beta-type (group I) subfamily. As to quaternary structure, a hemichannel or connexon is composed of a hexamer of connexins. A functional gap junction is formed by the apposition of two hemichannels. Forms heteromeric channels with GJB4. Interacts with CNST.

The protein localises to the cell membrane. It localises to the cell junction. Its subcellular location is the gap junction. Structural component of gap junctions. Gap junctions are dodecameric channels that connect the cytoplasm of adjoining cells. They are formed by the docking of two hexameric hemichannels, one from each cell membrane. Small molecules and ions diffuse from one cell to a neighboring cell via the central pore. The polypeptide is Gap junction beta-2 protein (GJB2) (Macaca mulatta (Rhesus macaque)).